Here is a 531-residue protein sequence, read N- to C-terminus: Dimethylnonatriene synthase (531 aa).

The helical transmembrane segment at 6 to 26 threads the bilayer; sequence TMSVAMALAAAIFVVLCSVVA. Cys-464 is a binding site for heme.

Belongs to the cytochrome P450 family. The cofactor is heme.

It is found in the membrane. It carries out the reaction (6E,10E)-geranyllinalool + reduced [NADPH--hemoprotein reductase] + O2 = (3E,7E)-4,8,12-trimethyltrideca 1,3,7,11-tetraene + but-3-en-2-one + oxidized [NADPH--hemoprotein reductase] + 2 H2O + H(+). The catalysed reaction is (3S,6E)-nerolidol + reduced [NADPH--hemoprotein reductase] + O2 = (3E)-4,8-dimethylnona-1,3,7-triene + but-3-en-2-one + oxidized [NADPH--hemoprotein reductase] + 2 H2O + H(+). The protein operates within secondary metabolite biosynthesis; terpenoid biosynthesis. Functionally, involved in the biosynthesis of homoterpenes, attractants of herbivores parasitoids and predators (e.g. predatory mites and parasitoid wasps). Component of the volatile terpenes biosynthesis pathways. Converts mainly nerolidol to dimethylnonatriene (DMNT) and, to a lower extent, geranyllinalool to trimethyltridecatetraene (TMTT). The protein is Dimethylnonatriene synthase of Zea mays (Maize).